The following is a 351-amino-acid chain: Dual-specificity RNA methyltransferase RlmN (351 aa).

The active-site Proton acceptor is E90. The region spanning E96 to D330 is the Radical SAM core domain. A disulfide bridge links C103 with C335. C110, C114, and C117 together coordinate [4Fe-4S] cluster. Residues G162 to E163, S194, S216 to H218, and N292 each bind S-adenosyl-L-methionine. The S-methylcysteine intermediate role is filled by C335.

This sequence belongs to the radical SAM superfamily. RlmN family. It depends on [4Fe-4S] cluster as a cofactor.

It localises to the cytoplasm. It catalyses the reaction adenosine(2503) in 23S rRNA + 2 reduced [2Fe-2S]-[ferredoxin] + 2 S-adenosyl-L-methionine = 2-methyladenosine(2503) in 23S rRNA + 5'-deoxyadenosine + L-methionine + 2 oxidized [2Fe-2S]-[ferredoxin] + S-adenosyl-L-homocysteine. It carries out the reaction adenosine(37) in tRNA + 2 reduced [2Fe-2S]-[ferredoxin] + 2 S-adenosyl-L-methionine = 2-methyladenosine(37) in tRNA + 5'-deoxyadenosine + L-methionine + 2 oxidized [2Fe-2S]-[ferredoxin] + S-adenosyl-L-homocysteine. Its function is as follows. Specifically methylates position 2 of adenine 2503 in 23S rRNA and position 2 of adenine 37 in tRNAs. m2A2503 modification seems to play a crucial role in the proofreading step occurring at the peptidyl transferase center and thus would serve to optimize ribosomal fidelity. This chain is Dual-specificity RNA methyltransferase RlmN, found in Solidesulfovibrio magneticus (strain ATCC 700980 / DSM 13731 / RS-1) (Desulfovibrio magneticus).